We begin with the raw amino-acid sequence, 415 residues long: DNA polymerase IV (415 aa).

One can recognise a UmuC domain in the interval 15–196 (ILHVDMNCFF…LPVGAMHGIG (182 aa)). Asp19 and Asp115 together coordinate Mg(2+). Glu116 is an active-site residue. The segment at 238-260 (KGMDDRQVDPSQMGQHKSVGNSM) is disordered. The span at 246-260 (DPSQMGQHKSVGNSM) shows a compositional bias: polar residues.

It belongs to the DNA polymerase type-Y family. As to quaternary structure, monomer. It depends on Mg(2+) as a cofactor.

The protein resides in the cytoplasm. It carries out the reaction DNA(n) + a 2'-deoxyribonucleoside 5'-triphosphate = DNA(n+1) + diphosphate. Poorly processive, error-prone DNA polymerase involved in untargeted mutagenesis. Copies undamaged DNA at stalled replication forks, which arise in vivo from mismatched or misaligned primer ends. These misaligned primers can be extended by PolIV. Exhibits no 3'-5' exonuclease (proofreading) activity. May be involved in translesional synthesis, in conjunction with the beta clamp from PolIII. In Bacillus cereus (strain ZK / E33L), this protein is DNA polymerase IV.